Here is a 379-residue protein sequence, read N- to C-terminus: RNA-splicing ligase RtcB2 (379 aa).

Residues aspartate 74, cysteine 77, histidine 137, histidine 168, and histidine 239 each contribute to the Mn(2+) site. 136–140 is a GMP binding site; sequence NHFVE. GMP contacts are provided by residues 239 to 240, serine 277, 294 to 297, and lysine 372; these read HN and HGAG. The active-site GMP-histidine intermediate is the histidine 294.

Belongs to the RtcB family. RtcB2 subfamily. It depends on Mn(2+) as a cofactor.

It carries out the reaction a 3'-end 3'-phospho-ribonucleotide-RNA + a 5'-end dephospho-ribonucleoside-RNA + GTP = a ribonucleotidyl-ribonucleotide-RNA + GMP + diphosphate. GTP-dependent RNA ligase involved in rRNA repair. Repairs damaged 16S rRNA in 30S subunits that has been cleaved between adenine-1493 and guanosine-1494 (E.coli nubering). This specific cleavage is inflicted by CdiA (ECL_04451) or by colicin E3-type (ColE3) proteins. Poorly repairs damaged rRNA in the 70S ribosome; addition of release factor PrfH improves repair about 3-fold in vitro, probably because PrfH hydrolyzes the nascent chain allowing ribosomal subunit dissociation. In vivo the PrfH-RtcB2 pair restores growth in the presence of ribotoxins that specifically create this damage. Does not repair damaged tRNA (tested with tRNA(Asp) and tRNA(Arg)). The chain is RNA-splicing ligase RtcB2 from Escherichia coli (strain ATCC 25922 / DSM 1103 / LMG 8223 / NCIMB 12210 / NCTC 12241 / WDCM 00013 / Seattle 1946).